A 511-amino-acid chain; its full sequence is Maturase K (511 aa).

This sequence belongs to the intron maturase 2 family. MatK subfamily.

The protein localises to the plastid. The protein resides in the chloroplast. In terms of biological role, usually encoded in the trnK tRNA gene intron. Probably assists in splicing its own and other chloroplast group II introns. The chain is Maturase K from Diplacus aurantiacus (Orange bush monkey flower).